The following is a 332-amino-acid chain: Adenosine deaminase (332 aa).

Zn(2+) contacts are provided by H12 and H14. Substrate-binding residues include H14, D16, and G170. H197 serves as a coordination point for Zn(2+). E200 (proton donor) is an active-site residue. D278 contributes to the Zn(2+) binding site.

Belongs to the metallo-dependent hydrolases superfamily. Adenosine and AMP deaminases family. Adenosine deaminase subfamily. Requires Zn(2+) as cofactor.

The enzyme catalyses adenosine + H2O + H(+) = inosine + NH4(+). It catalyses the reaction 2'-deoxyadenosine + H2O + H(+) = 2'-deoxyinosine + NH4(+). Functionally, catalyzes the hydrolytic deamination of adenosine and 2-deoxyadenosine. This is Adenosine deaminase from Clostridium perfringens (strain ATCC 13124 / DSM 756 / JCM 1290 / NCIMB 6125 / NCTC 8237 / Type A).